The primary structure comprises 163 residues: Large ribosomal subunit protein uL10 (163 aa).

It belongs to the universal ribosomal protein uL10 family. Part of the ribosomal stalk of the 50S ribosomal subunit. The N-terminus interacts with L11 and the large rRNA to form the base of the stalk. The C-terminus forms an elongated spine to which L12 dimers bind in a sequential fashion forming a multimeric L10(L12)X complex.

In terms of biological role, forms part of the ribosomal stalk, playing a central role in the interaction of the ribosome with GTP-bound translation factors. The protein is Large ribosomal subunit protein uL10 of Haemophilus ducreyi (strain 35000HP / ATCC 700724).